The primary structure comprises 218 residues: Transmembrane gamma-carboxyglutamic acid protein 1 (218 aa).

Positions 1-20 (MGRVFLTGEKANSVLKRYPR) are excised as a propeptide. The Gla domain occupies 20–66 (RANGFFEEIRQGNIERECKEEFCTFEEAREAFENNEKTKEFWSTYTK). Residues 21–80 (ANGFFEEIRQGNIERECKEEFCTFEEAREAFENNEKTKEFWSTYTKAQQGESNRGSDWFQ) are Extracellular-facing. C37 and C42 are oxidised to a cystine. Residues 81-101 (FYLTFPLIFGLFIILLVIFLI) traverse the membrane as a helical segment. At 102 to 218 (WRCFLRNKTR…PMVPVVTTIK (117 aa)) the chain is on the cytoplasmic side. The segment at 161–195 (TRLSNCDPPPTYEEATGQVNLQRSETEPHLDPPPE) is disordered.

Post-translationally, gla residues are produced after subsequent post-translational modifications of glutamate by a vitamin K-dependent gamma-carboxylase.

It is found in the membrane. The protein is Transmembrane gamma-carboxyglutamic acid protein 1 (PRRG1) of Pongo abelii (Sumatran orangutan).